The chain runs to 397 residues: 2-isopropylmalate synthase 1 (397 aa).

One can recognise a Pyruvate carboxyltransferase domain in the interval Val-6 to Tyr-268. Mn(2+)-binding residues include Asp-15, His-203, His-205, and Asn-239.

The protein belongs to the alpha-IPM synthase/homocitrate synthase family. LeuA type 1 subfamily. Homodimer. Requires Mn(2+) as cofactor.

It localises to the cytoplasm. It catalyses the reaction 3-methyl-2-oxobutanoate + acetyl-CoA + H2O = (2S)-2-isopropylmalate + CoA + H(+). It functions in the pathway amino-acid biosynthesis; L-leucine biosynthesis; L-leucine from 3-methyl-2-oxobutanoate: step 1/4. In terms of biological role, catalyzes the condensation of the acetyl group of acetyl-CoA with 3-methyl-2-oxobutanoate (2-ketoisovalerate) to form 3-carboxy-3-hydroxy-4-methylpentanoate (2-isopropylmalate). The chain is 2-isopropylmalate synthase 1 from Caldanaerobacter subterraneus subsp. tengcongensis (strain DSM 15242 / JCM 11007 / NBRC 100824 / MB4) (Thermoanaerobacter tengcongensis).